Reading from the N-terminus, the 154-residue chain is Transcriptional repressor NrdR (154 aa).

A zinc finger spans residues 3 to 34 (CPFCGNDETKVLESRQVEEGTAVRRRRECERC). One can recognise an ATP-cone domain in the interval 49–139 (LIVVKKDGRR…VYREFKDVQR (91 aa)).

This sequence belongs to the NrdR family. Requires Zn(2+) as cofactor.

Negatively regulates transcription of bacterial ribonucleotide reductase nrd genes and operons by binding to NrdR-boxes. The polypeptide is Transcriptional repressor NrdR (Desulfitobacterium hafniense (strain DSM 10664 / DCB-2)).